Here is a 245-residue protein sequence, read N- to C-terminus: Uridylate kinase (245 aa).

An ATP-binding site is contributed by 18–21; the sequence is KLSG. A UMP-binding site is contributed by G60. ATP is bound by residues G61 and R65. Residues D80 and 141–148 contribute to the UMP site; that span reads TGNPFFTT. T168, Y174, and D177 together coordinate ATP.

It belongs to the UMP kinase family. Homohexamer.

Its subcellular location is the cytoplasm. The catalysed reaction is UMP + ATP = UDP + ADP. The protein operates within pyrimidine metabolism; CTP biosynthesis via de novo pathway; UDP from UMP (UMPK route): step 1/1. Its activity is regulated as follows. Inhibited by UTP. Functionally, catalyzes the reversible phosphorylation of UMP to UDP. The chain is Uridylate kinase from Pseudomonas paraeruginosa (strain DSM 24068 / PA7) (Pseudomonas aeruginosa (strain PA7)).